Consider the following 337-residue polypeptide: DNA-directed RNA polymerase subunit alpha (337 aa).

Residues 1–233 (MVREKVTVST…DLFIPFLHME (233 aa)) form an alpha N-terminal domain (alpha-NTD) region. An alpha C-terminal domain (alpha-CTD) region spans residues 264–337 (NKKIALKSIF…FVIDLAKNKF (74 aa)).

It belongs to the RNA polymerase alpha chain family. In terms of assembly, in plastids the minimal PEP RNA polymerase catalytic core is composed of four subunits: alpha, beta, beta', and beta''. When a (nuclear-encoded) sigma factor is associated with the core the holoenzyme is formed, which can initiate transcription.

Its subcellular location is the plastid. It is found in the chloroplast. It catalyses the reaction RNA(n) + a ribonucleoside 5'-triphosphate = RNA(n+1) + diphosphate. Its function is as follows. DNA-dependent RNA polymerase catalyzes the transcription of DNA into RNA using the four ribonucleoside triphosphates as substrates. In Atropa belladonna (Belladonna), this protein is DNA-directed RNA polymerase subunit alpha.